An 847-amino-acid polypeptide reads, in one-letter code: Zinc transporter ZIP10 (847 aa).

A signal peptide spans 1-26 (MMRVHTHTRLCFLCVLTLLYHQCSHC). Positions 136 to 374 (GRHSHSAGHP…RREVPGSPAH (239 aa)) are disordered. Residues 162 to 171 (HHENEEHTLA) show a composition bias toward basic and acidic residues. Residues 179 to 188 (TLGTGATPPS) are compositionally biased toward polar residues. A compositionally biased stretch (basic and acidic residues) spans 190-269 (SEEHDHDHEH…QEHNDLSDQN (80 aa)). 2 stretches are compositionally biased toward basic residues: residues 270-285 (HHHHDHHHHKHPHPHL) and 314-330 (TRRHRRPSKVKAHRGRN). N-linked (GlcNAc...) asparagine glycosylation occurs at N385. 3 helical membrane-spanning segments follow: residues 447-467 (FVSITIISLLSLLGVVLVPIL), 474-494 (FLLTFLVALAVGTLSGDALLH), and 529-549 (GLTALAGIYLLFIIEHCIGMF). Positions 613–676 (ELQPLDSPSK…HSHHGHCHSD (64 aa)) are disordered. Positions 629-646 (DSDHPYEAPVKTEEDNVP) are enriched in basic and acidic residues. Residues 648–672 (AKSKKHGHGHGHGHGHGHGHSHHGH) are compositionally biased toward basic residues. 4 helical membrane-spanning segments follow: residues 705-725 (AIGAAFSANITGGISTSVAVF), 750-770 (IVYNLLSALMAYAGMVIGTAV), 779-799 (SWIFAVTAGMFLYVALVDMLP), and 817-837 (FVLQNFGMLTGFGIMLLIAIF).

This sequence belongs to the ZIP transporter (TC 2.A.5) family. Undergoes N-terminal ectodomain shedding.

The protein localises to the cell membrane. Its subcellular location is the apical cell membrane. The catalysed reaction is Zn(2+)(in) = Zn(2+)(out). Its function is as follows. Zinc-influx transporter. When associated with slc39a6, the heterodimer slc39a10/slc39a6 has a functional role in epithelial-mesenchymal transition (EMT) during embryonic development. Slc39a10/slc39a6 heterodimers play also an essentiel role in initiating mitosis by importing zinc into cells to initiate a pathway resulting in the onset of mitosis. When associated with slc39a6, the heterodimer controls Ncam1 phosphorylation and integration into focal adhesion complexes during EMT. This Danio rerio (Zebrafish) protein is Zinc transporter ZIP10.